Consider the following 285-residue polypeptide: Pantothenate synthetase (285 aa).

30–37 (MGNLHDGH) lines the ATP pocket. Histidine 37 serves as the catalytic Proton donor. A (R)-pantoate-binding site is contributed by glutamine 61. Glutamine 61 contacts beta-alanine. 149-152 (GEKD) is a binding site for ATP. Residue glutamine 155 coordinates (R)-pantoate. Residues isoleucine 178 and 186–189 (LSSR) each bind ATP.

This sequence belongs to the pantothenate synthetase family. Homodimer.

The protein resides in the cytoplasm. It carries out the reaction (R)-pantoate + beta-alanine + ATP = (R)-pantothenate + AMP + diphosphate + H(+). The protein operates within cofactor biosynthesis; (R)-pantothenate biosynthesis; (R)-pantothenate from (R)-pantoate and beta-alanine: step 1/1. Catalyzes the condensation of pantoate with beta-alanine in an ATP-dependent reaction via a pantoyl-adenylate intermediate. The sequence is that of Pantothenate synthetase from Buchnera aphidicola subsp. Acyrthosiphon pisum (strain Tuc7).